We begin with the raw amino-acid sequence, 407 residues long: Probable tRNA sulfurtransferase (407 aa).

In terms of domain architecture, THUMP spans 61–165 (EEMCNRLKKV…LDAIYMYDQV (105 aa)). ATP is bound by residues 183–184 (ML), 208–209 (HF), arginine 265, glycine 287, and glutamine 296.

It belongs to the ThiI family.

Its subcellular location is the cytoplasm. It catalyses the reaction [ThiI sulfur-carrier protein]-S-sulfanyl-L-cysteine + a uridine in tRNA + 2 reduced [2Fe-2S]-[ferredoxin] + ATP + H(+) = [ThiI sulfur-carrier protein]-L-cysteine + a 4-thiouridine in tRNA + 2 oxidized [2Fe-2S]-[ferredoxin] + AMP + diphosphate. The enzyme catalyses [ThiS sulfur-carrier protein]-C-terminal Gly-Gly-AMP + S-sulfanyl-L-cysteinyl-[cysteine desulfurase] + AH2 = [ThiS sulfur-carrier protein]-C-terminal-Gly-aminoethanethioate + L-cysteinyl-[cysteine desulfurase] + A + AMP + 2 H(+). The protein operates within cofactor biosynthesis; thiamine diphosphate biosynthesis. Functionally, catalyzes the ATP-dependent transfer of a sulfur to tRNA to produce 4-thiouridine in position 8 of tRNAs, which functions as a near-UV photosensor. Also catalyzes the transfer of sulfur to the sulfur carrier protein ThiS, forming ThiS-thiocarboxylate. This is a step in the synthesis of thiazole, in the thiamine biosynthesis pathway. The sulfur is donated as persulfide by IscS. In Staphylococcus saprophyticus subsp. saprophyticus (strain ATCC 15305 / DSM 20229 / NCIMB 8711 / NCTC 7292 / S-41), this protein is Probable tRNA sulfurtransferase.